A 278-amino-acid chain; its full sequence is Thioredoxin-related transmembrane protein 1 (278 aa).

Residues 1 to 26 (MAPSGSLRIPVAVLLLLLWGAPWAHG) form the signal peptide. The Thioredoxin domain occupies 27-132 (KRSDVRIITD…FINFISDKEW (106 aa)). Residues 27–180 (KRSDVRIITD…EDLGLPIWGS (154 aa)) lie on the Extracellular side of the membrane. Active-site nucleophile residues include cysteine 56 and cysteine 59. Cysteine 56 and cysteine 59 form a disulfide bridge. Residues 181 to 203 (YTVFALATLLSGLLLGLFMIFVA) form a helical membrane-spanning segment. The Cytoplasmic segment spans residues 204-278 (DCLCPSKRRR…VGPSLATDKS (75 aa)). 2 S-palmitoyl cysteine lipidation sites follow: cysteine 205 and cysteine 207. The tract at residues 213-278 (RPQPYPSRKL…VGPSLATDKS (66 aa)) is disordered. Phosphoserine is present on residues serine 226, serine 245, serine 268, serine 272, and serine 278. Positions 235 to 250 (EEQEADVEDVSEEESE) are enriched in acidic residues.

In terms of assembly, interacts with ATP2A2. Post-translationally, palmitoylated; palmitoylation is required for localization to mitochondria-associated endoplasmic reticulum membrane (MAM).

The protein localises to the endoplasmic reticulum membrane. The protein resides in the mitochondrion membrane. It is found in the secreted. The enzyme catalyses Catalyzes the rearrangement of -S-S- bonds in proteins.. Its function is as follows. Thiredoxin domain-containing protein that participates in various redox reactions through the reversible oxidation of its active center dithiol to a disulfide and catalyze dithiol-disulfide exchange reactions. Acts as a key inhibitor of the alternative triglyceride biosynthesis pathway by inhibiting the activity of TMEM68/DIESL at the endoplasmic reticulum, thereby restricting accumulation of triacylglycerol. The alternative triglyceride biosynthesis pathway mediates formation of triacylglycerol from diacylglycerol and membrane phospholipids. Acts as a protein disulfide isomerase by catalyzing formation or reduction of disulfide bonds. Specifically mediates formation of disulfide bonds of transmembrane proteins at the endoplasmic reticulum membrane. Involved in endoplasmic reticulum-associated degradation (ERAD) via its protein disulfide isomerase activity by acting on folding-defective polypeptides at the endoplasmic reticulum membrane. Acts as a negative regulator of platelet aggregation following secretion in the extracellular space. Acts as a regulator of endoplasmic reticulum-mitochondria contact sites via its ability to regulate redox signals. Regulates endoplasmic reticulum-mitochondria Ca(2+) flux. This is Thioredoxin-related transmembrane protein 1 (TMX1) from Bos taurus (Bovine).